Here is a 306-residue protein sequence, read N- to C-terminus: N-acetylmuramic acid/N-acetylglucosamine kinase (306 aa).

Ser-12 serves as a coordination point for ATP. Position 35 (Asn-35) interacts with substrate. ATP is bound at residue Thr-124. Residues 142-144 (GWG) and Asp-149 each bind substrate. Ala-208 is an ATP binding site.

It belongs to the eukaryotic-type N-acetylglucosamine kinase family. Requires Mg(2+) as cofactor.

Its subcellular location is the cytoplasm. The catalysed reaction is N-acetyl-D-glucosamine + ATP = N-acetyl-D-glucosamine 6-phosphate + ADP + H(+). It carries out the reaction N-acetyl-D-muramate + ATP = N-acetyl-D-muramate 6-phosphate + ADP + H(+). It functions in the pathway cell wall biogenesis; peptidoglycan recycling. Catalyzes the ATP-dependent phosphorylation of both cell wall (peptidoglycan) amino sugars, N-acetylmuramic acid (MurNAc) and N-acetylglucosamine (GlcNAc), at the 6-hydroxyl group. Neither the non-N-acetylated forms of the cell wall sugars, i.e., glucosamine and/or muramic acid, nor epimeric hexoses or 1,6-anhydro-MurNAc are substrates for the enzyme. May have a role in the rescue of the murein sugars GlcNAc and MurNAc released from muropeptides during cell wall turnover in C.acetobutylicum. The sequence is that of N-acetylmuramic acid/N-acetylglucosamine kinase from Clostridium acetobutylicum (strain ATCC 824 / DSM 792 / JCM 1419 / IAM 19013 / LMG 5710 / NBRC 13948 / NRRL B-527 / VKM B-1787 / 2291 / W).